Consider the following 161-residue polypeptide: 3-isopropylmalate dehydratase small subunit (161 aa).

The protein belongs to the LeuD family. LeuD type 2 subfamily. Heterodimer of LeuC and LeuD.

It carries out the reaction (2R,3S)-3-isopropylmalate = (2S)-2-isopropylmalate. Its pathway is amino-acid biosynthesis; L-leucine biosynthesis; L-leucine from 3-methyl-2-oxobutanoate: step 2/4. Functionally, catalyzes the isomerization between 2-isopropylmalate and 3-isopropylmalate, via the formation of 2-isopropylmaleate. The protein is 3-isopropylmalate dehydratase small subunit of Sulfolobus acidocaldarius (strain ATCC 33909 / DSM 639 / JCM 8929 / NBRC 15157 / NCIMB 11770).